A 142-amino-acid polypeptide reads, in one-letter code: MSKNVVIAEQEKNNEHCPEDINDKLSESTDDDGEDTSDEDKEEDSNPNKDTHAPLELMTEFLRAEMGHDYHLAKKLCQMILIYEPENPEAKEFFSLIEEMLLMEKAQNLEEDDDESEEDNSESEGESTEDPSEESSDECEDG.

Disordered stretches follow at residues 1 to 55 (MSKN…HAPL) and 104 to 142 (EKAQ…CEDG). The span at 9 to 27 (EQEKNNEHCPEDINDKLSE) shows a compositional bias: basic and acidic residues. Acidic residues predominate over residues 28 to 43 (STDDDGEDTSDEDKEE). Positions 44–53 (DSNPNKDTHA) are enriched in basic and acidic residues. Residues 109–142 (LEEDDDESEEDNSESEGESTEDPSEESSDECEDG) show a composition bias toward acidic residues.

The protein is Glutamate-rich protein 2 (ERICH2) of Bos taurus (Bovine).